Consider the following 365-residue polypeptide: Aminomethyltransferase (365 aa).

The protein belongs to the GcvT family. In terms of assembly, the glycine cleavage system is composed of four proteins: P, T, L and H.

The catalysed reaction is N(6)-[(R)-S(8)-aminomethyldihydrolipoyl]-L-lysyl-[protein] + (6S)-5,6,7,8-tetrahydrofolate = N(6)-[(R)-dihydrolipoyl]-L-lysyl-[protein] + (6R)-5,10-methylene-5,6,7,8-tetrahydrofolate + NH4(+). The glycine cleavage system catalyzes the degradation of glycine. This is Aminomethyltransferase from Yersinia pseudotuberculosis serotype O:3 (strain YPIII).